A 244-amino-acid chain; its full sequence is Maintenance of ploidy protein mob2 (244 aa).

Residues 14–45 form a disordered region; it reads NRSKRHQNLSDASSSSGSFSKKSSTSQLVRTG. Residues 23 to 39 are compositionally biased toward low complexity; that stretch reads SDASSSSGSFSKKSSTS. Phosphoserine occurs at positions 46 and 48.

Belongs to the MOB1/phocein family. As to quaternary structure, interacts with orb6.

It is found in the cytoplasm. Its subcellular location is the cell cortex. Required for coordinating polarized cell growth during interphase with the onset of mitosis. This is Maintenance of ploidy protein mob2 (mob2) from Schizosaccharomyces pombe (strain 972 / ATCC 24843) (Fission yeast).